The primary structure comprises 255 residues: NAD kinase (255 aa).

Catalysis depends on D44, which acts as the Proton acceptor. Residues 44–45 (DG), H49, 114–115 (NE), D144, A152, 155–160 (SAYNLS), and Q216 each bind NAD(+).

The protein belongs to the NAD kinase family. A divalent metal cation is required as a cofactor.

It is found in the cytoplasm. The catalysed reaction is NAD(+) + ATP = ADP + NADP(+) + H(+). Involved in the regulation of the intracellular balance of NAD and NADP, and is a key enzyme in the biosynthesis of NADP. Catalyzes specifically the phosphorylation on 2'-hydroxyl of the adenosine moiety of NAD to yield NADP. The polypeptide is NAD kinase (Rickettsia africae (strain ESF-5)).